A 174-amino-acid polypeptide reads, in one-letter code: Membrane protein NfeD2 (174 aa).

The next 3 membrane-spanning stretches (helical) occupy residues 16 to 36, 47 to 67, and 72 to 92; these read LIIA…FSGL, LVLS…LVLP, and LIAL…HIFV.

Belongs to the NfeD family.

The protein resides in the cell membrane. Its subcellular location is the membrane raft. In terms of biological role, plays a role in assembly of FloT membrane rafts, probably recruited to rafts by FloT. The chain is Membrane protein NfeD2 from Bacillus subtilis (strain 168).